Reading from the N-terminus, the 249-residue chain is Type III pantothenate kinase (249 aa).

ATP is bound at residue 6–13 (DCGNSFIK). Residues Tyr-93 and 100–103 (GLDR) contribute to the substrate site. Asp-102 functions as the Proton acceptor in the catalytic mechanism. Asp-122 contributes to the K(+) binding site. Thr-125 lines the ATP pocket. Residue Thr-181 participates in substrate binding.

It belongs to the type III pantothenate kinase family. In terms of assembly, homodimer. Requires NH4(+) as cofactor. It depends on K(+) as a cofactor.

It localises to the cytoplasm. The enzyme catalyses (R)-pantothenate + ATP = (R)-4'-phosphopantothenate + ADP + H(+). The protein operates within cofactor biosynthesis; coenzyme A biosynthesis; CoA from (R)-pantothenate: step 1/5. Functionally, catalyzes the phosphorylation of pantothenate (Pan), the first step in CoA biosynthesis. This is Type III pantothenate kinase from Pseudomonas savastanoi pv. phaseolicola (strain 1448A / Race 6) (Pseudomonas syringae pv. phaseolicola (strain 1448A / Race 6)).